We begin with the raw amino-acid sequence, 150 residues long: MFKQVLGGMALMAAFSAPVLAAECSVDIAGTDQMQFDKKAIEVSKSCKQFTVNLKHTGKLPRNVMGHNWVLTKTADMQAVEKDGIAAGLDNQYLKAGDTRVLAHTKVLGGGESDSVTFDVAKLAAGDDYTFFCSFPGHGALMKGTLKLVD.

Residues 1 to 21 (MFKQVLGGMALMAAFSAPVLA) form the signal peptide. A Plastocyanin-like domain is found at 22-150 (AECSVDIAGT…LMKGTLKLVD (129 aa)). Residues Cys-24 and Cys-47 are joined by a disulfide bond. 4 residues coordinate Cu cation: His-67, Cys-133, His-138, and Met-142.

Its subcellular location is the periplasm. The polypeptide is Azurin (Bordetella bronchiseptica (strain ATCC BAA-588 / NCTC 13252 / RB50) (Alcaligenes bronchisepticus)).